We begin with the raw amino-acid sequence, 86 residues long: MANIKSAKKRALQSEKSRKHNASRRTMMRTFIKKVVVAIEAANKEVATAEFVKLQSVLDSYATKGLINKNTAARKKSRLSAKIKAL.

A disordered region spans residues 1–26; that stretch reads MANIKSAKKRALQSEKSRKHNASRRT.

This sequence belongs to the bacterial ribosomal protein bS20 family.

Functionally, binds directly to 16S ribosomal RNA. In Psychromonas ingrahamii (strain DSM 17664 / CCUG 51855 / 37), this protein is Small ribosomal subunit protein bS20.